We begin with the raw amino-acid sequence, 208 residues long: FMN-dependent NADH:quinone oxidoreductase (208 aa).

FMN-binding positions include histidine 10, 17 to 19 (SRS), 104 to 107 (MWNL), 148 to 153 (SNGGFY), and aspartate 184.

This sequence belongs to the azoreductase type 1 family. As to quaternary structure, homodimer. Requires FMN as cofactor.

It carries out the reaction 2 a quinone + NADH + H(+) = 2 a 1,4-benzosemiquinone + NAD(+). The catalysed reaction is N,N-dimethyl-1,4-phenylenediamine + anthranilate + 2 NAD(+) = 2-(4-dimethylaminophenyl)diazenylbenzoate + 2 NADH + 2 H(+). Quinone reductase that provides resistance to thiol-specific stress caused by electrophilic quinones. Its function is as follows. Also exhibits azoreductase activity. Catalyzes the reductive cleavage of the azo bond in aromatic azo compounds to the corresponding amines. Requires NADH, but not NADPH, as an electron donor for its activity. The enzyme can also reduce a wide range of sulfonated azo dyes. The substrate preference order is methyl Red &gt; Orange II &gt; Ponceau BS &gt; Ponceau S &gt; Orange G &gt; Amaranth. This is FMN-dependent NADH:quinone oxidoreductase from Enterococcus faecalis (strain ATCC 700802 / V583).